Consider the following 122-residue polypeptide: Small ribosomal subunit protein uS12cz/uS12cy (122 aa).

The protein belongs to the universal ribosomal protein uS12 family. As to quaternary structure, part of the 30S ribosomal subunit.

The protein localises to the plastid. Its subcellular location is the chloroplast. In terms of biological role, with S4 and S5 plays an important role in translational accuracy. Located at the interface of the 30S and 50S subunits. The protein is Small ribosomal subunit protein uS12cz/uS12cy (rps12-A) of Triticum aestivum (Wheat).